A 64-amino-acid chain; its full sequence is Translational regulator CsrA (64 aa).

Belongs to the CsrA/RsmA family. As to quaternary structure, homodimer; the beta-strands of each monomer intercalate to form a hydrophobic core, while the alpha-helices form wings that extend away from the core.

It localises to the cytoplasm. Functionally, a key translational regulator that binds mRNA to regulate translation initiation and/or mRNA stability. Mediates global changes in gene expression, shifting from rapid growth to stress survival by linking envelope stress, the stringent response and the catabolite repression systems. Usually binds in the 5'-UTR; binding at or near the Shine-Dalgarno sequence prevents ribosome-binding, repressing translation, binding elsewhere in the 5'-UTR can activate translation and/or stabilize the mRNA. Its function is antagonized by small RNA(s). The chain is Translational regulator CsrA from Thioalkalivibrio sulfidiphilus (strain HL-EbGR7).